Here is a 312-residue protein sequence, read N- to C-terminus: Glyceraldehyde-3-phosphate dehydrogenase, cytosolic (312 aa).

NAD(+) is bound by residues 5–6 (RI) and Asp-27. Residues 144–146 (SCT), Thr-175, 204–205 (TG), and Arg-227 contribute to the D-glyceraldehyde 3-phosphate site. Cys-145 acts as the Nucleophile in catalysis. Asn-309 is a binding site for NAD(+).

The protein belongs to the glyceraldehyde-3-phosphate dehydrogenase family. As to quaternary structure, homotetramer.

Its subcellular location is the cytoplasm. The catalysed reaction is D-glyceraldehyde 3-phosphate + phosphate + NAD(+) = (2R)-3-phospho-glyceroyl phosphate + NADH + H(+). Its pathway is carbohydrate degradation; glycolysis; pyruvate from D-glyceraldehyde 3-phosphate: step 1/5. In terms of biological role, key enzyme in glycolysis that catalyzes the first step of the pathway by converting D-glyceraldehyde 3-phosphate (G3P) into 3-phospho-D-glyceroyl phosphate. Essential for the maintenance of cellular ATP levels and carbohydrate metabolism. This Scenedesmus vacuolatus (Green alga) protein is Glyceraldehyde-3-phosphate dehydrogenase, cytosolic (GapC).